Reading from the N-terminus, the 736-residue chain is Transcription factor E2F8 (736 aa).

The disordered stretch occupies residues 1-26 (MEEGSKENCGFNGSPMGSRSPPKQLT). Polar residues predominate over residues 15–26 (PMGSRSPPKQLT). 2 consecutive DNA-binding regions follow at residues 98 to 167 (RKEK…IWHG) and 240 to 326 (RKEK…QWTC). Disordered regions lie at residues 386–405 (RRKI…GSSS), 435–456 (SACK…QTPT), 483–551 (EQTL…AVDD), and 716–736 (PGGM…GTDD). Over residues 393-405 (PSSPIKSGDGSSS) the composition is skewed to low complexity. Basic and acidic residues-rich tracts occupy residues 509–539 (GRHE…DRGC) and 726–736 (SARKLDVGTDD).

The protein belongs to the E2F/DP family. In terms of assembly, homodimer and heterodimer: mainly forms homodimers and, to a lesser extent, heterodimers with e2f7.

The protein resides in the nucleus. Functionally, atypical E2F transcription factor that participates in various processes such as angiogenesis and polyploidization of specialized cells. Mainly acts as a transcription repressor that binds DNA independently of DP proteins and specifically recognizes the E2 recognition site 5'-TTTC[CG]CGC-3'. Directly represses transcription of classical E2F transcription factors such as e2f1. Acts as a regulator of S-phase by recognizing and binding the E2-related site 5'-TTCCCGCC-3' and mediating repression of G1/S-regulated genes. Acts as a promoter of sprouting angiogenesis, possibly by acting as a transcription activator. This chain is Transcription factor E2F8 (e2f8), found in Xenopus tropicalis (Western clawed frog).